The chain runs to 445 residues: Probable D-serine dehydratase (445 aa).

At Lys-111 the chain carries N6-(pyridoxal phosphate)lysine.

The protein belongs to the serine/threonine dehydratase family. DsdA subfamily. Pyridoxal 5'-phosphate serves as cofactor.

It carries out the reaction D-serine = pyruvate + NH4(+). The sequence is that of Probable D-serine dehydratase from Burkholderia pseudomallei (strain 668).